Here is a 72-residue protein sequence, read N- to C-terminus: SRY-related protein AES6 (72 aa).

A DNA-binding region (HMG box) is located at residues 1–69 (VKRPMNAFMV…KHMADYPDYK (69 aa)).

The protein resides in the nucleus. This Alligator mississippiensis (American alligator) protein is SRY-related protein AES6.